The following is a 451-amino-acid chain: Spermidine sinapoyl-CoA acyltransferase (451 aa).

Residues Tyr47, His169, Ser294, Asp316, and Leu378 each coordinate spermidine. Catalysis depends on His169, which acts as the Proton acceptor. Catalysis depends on Asp391, which acts as the Proton acceptor.

The protein belongs to the plant acyltransferase family. As to quaternary structure, monomer. Predominantly expressed in siliques, especially in seeds around the embryo, and, at low levels, in flowers. Barely detectable in stems, leaves, and roots.

It catalyses the reaction 2 (E)-sinapoyl-CoA + spermidine = N(1),N(8)-bis[(E)-sinapoyl]-spermidine + 2 CoA + 2 H(+). It functions in the pathway amine and polyamine metabolism; spermidine metabolism. Spermidine sinapoyl-CoA acyltransferase that mediates the accumulation of disinapoyl spermidine conjugates in seeds. Catalyzes the two conjugating steps required for the biosynthesis of N1,N8-disipanoyl-spermidine. Can also use putrescine as an acyl acceptor to convert it into monosinapoyl-putrescine. This Arabidopsis thaliana (Mouse-ear cress) protein is Spermidine sinapoyl-CoA acyltransferase.